The primary structure comprises 482 residues: Cysteine--tRNA ligase (482 aa).

Zn(2+) is bound at residue C29. The 'HIGH' region signature appears at 31–41 (PTVYDFAHIGN). C224, H249, and E253 together coordinate Zn(2+). Positions 282 to 286 (KMSKS) match the 'KMSKS' region motif. K285 lines the ATP pocket.

It belongs to the class-I aminoacyl-tRNA synthetase family. Monomer. It depends on Zn(2+) as a cofactor.

The protein resides in the cytoplasm. The catalysed reaction is tRNA(Cys) + L-cysteine + ATP = L-cysteinyl-tRNA(Cys) + AMP + diphosphate. The polypeptide is Cysteine--tRNA ligase (Nitrobacter hamburgensis (strain DSM 10229 / NCIMB 13809 / X14)).